Reading from the N-terminus, the 90-residue chain is Large ribosomal subunit protein eL37 (90 aa).

Residues cysteine 19, cysteine 22, cysteine 34, and cysteine 37 each contribute to the Zn(2+) site. The C4-type zinc-finger motif lies at 19-37 (CRRCGRQSYHKQKNSCSSC). The segment covering 21–31 (RCGRQSYHKQK) has biased composition (basic residues). Positions 21–59 (RCGRQSYHKQKNSCSSCGYPNPKMRNPGSIKARRRRTIG) are disordered.

The protein belongs to the eukaryotic ribosomal protein eL37 family. Zn(2+) serves as cofactor.

Functionally, binds to the 23S rRNA. This is Large ribosomal subunit protein eL37 (RPL37) from Encephalitozoon cuniculi (strain GB-M1) (Microsporidian parasite).